The chain runs to 337 residues: Putative 2-aminoethylphosphonate-binding periplasmic protein (337 aa).

The first 21 residues, 1–21 (MKLSRLALLSVFALASAPSWA), serve as a signal peptide directing secretion.

Belongs to the bacterial solute-binding protein 1 family.

It is found in the periplasm. Functionally, probably part of the PhnSTUV complex (TC 3.A.1.11.5) involved in 2-aminoethylphosphonate import. The polypeptide is Putative 2-aminoethylphosphonate-binding periplasmic protein (phnS) (Salmonella typhimurium (strain LT2 / SGSC1412 / ATCC 700720)).